Here is a 290-residue protein sequence, read N- to C-terminus: ATP synthase gamma chain (290 aa).

It belongs to the ATPase gamma chain family. F-type ATPases have 2 components, CF(1) - the catalytic core - and CF(0) - the membrane proton channel. CF(1) has five subunits: alpha(3), beta(3), gamma(1), delta(1), epsilon(1). CF(0) has three main subunits: a, b and c.

Its subcellular location is the cell inner membrane. Produces ATP from ADP in the presence of a proton gradient across the membrane. The gamma chain is believed to be important in regulating ATPase activity and the flow of protons through the CF(0) complex. In Dinoroseobacter shibae (strain DSM 16493 / NCIMB 14021 / DFL 12), this protein is ATP synthase gamma chain.